A 347-amino-acid chain; its full sequence is GMP reductase (347 aa).

108–131 (ADFEKTVQILALDPALNFVCIDVA) contributes to the NADP(+) binding site. Residues glycine 181 and glycine 183 each coordinate K(+). Catalysis depends on cysteine 186, which acts as the Thioimidate intermediate. 216–239 (IVSDGGCTMPGDVAKAFGGGADFV) serves as a coordination point for NADP(+).

This sequence belongs to the IMPDH/GMPR family. GuaC type 1 subfamily. As to quaternary structure, homotetramer.

The catalysed reaction is IMP + NH4(+) + NADP(+) = GMP + NADPH + 2 H(+). In terms of biological role, catalyzes the irreversible NADPH-dependent deamination of GMP to IMP. It functions in the conversion of nucleobase, nucleoside and nucleotide derivatives of G to A nucleotides, and in maintaining the intracellular balance of A and G nucleotides. This is GMP reductase from Salmonella paratyphi B (strain ATCC BAA-1250 / SPB7).